Here is a 930-residue protein sequence, read N- to C-terminus: Isoleucine--tRNA ligase (930 aa).

Positions 57–67 match the 'HIGH' region motif; the sequence is PYANGNIHVGH. Glu554 contacts L-isoleucyl-5'-AMP. The 'KMSKS' region signature appears at 595 to 599; it reads KMSKS. ATP is bound at residue Lys598. Zn(2+)-binding residues include Cys888, Cys891, Cys908, and Cys911.

This sequence belongs to the class-I aminoacyl-tRNA synthetase family. IleS type 1 subfamily. Monomer. Zn(2+) is required as a cofactor.

It is found in the cytoplasm. The enzyme catalyses tRNA(Ile) + L-isoleucine + ATP = L-isoleucyl-tRNA(Ile) + AMP + diphosphate. Its function is as follows. Catalyzes the attachment of isoleucine to tRNA(Ile). As IleRS can inadvertently accommodate and process structurally similar amino acids such as valine, to avoid such errors it has two additional distinct tRNA(Ile)-dependent editing activities. One activity is designated as 'pretransfer' editing and involves the hydrolysis of activated Val-AMP. The other activity is designated 'posttransfer' editing and involves deacylation of mischarged Val-tRNA(Ile). The chain is Isoleucine--tRNA ligase from Streptococcus pneumoniae serotype 4 (strain ATCC BAA-334 / TIGR4).